We begin with the raw amino-acid sequence, 214 residues long: STS14 protein (214 aa).

Positions Met1–Tyr19 are cleaved as a signal peptide. 3 tandem repeats follow at residues Tyr13–Ile14, Tyr15–Ile16, and Tyr17–Ile18. A 3 X 2 AA tandem repeats of Y-I region spans residues Tyr13 to Ile18. One can recognise an SCP domain in the interval Leu80–Cys200.

This sequence belongs to the CRISP family. In terms of tissue distribution, highly expressed in the stigma and stylar cortex throughout pistil development. Not expressed in other organs.

May protect the outer tissues of the pistil from pathogen attack. In Solanum tuberosum (Potato), this protein is STS14 protein (STS14).